The primary structure comprises 98 residues: Protein Vpr (98 aa).

Positions 1–42 are homooligomerization; sequence MEQLPEDQGPQREPYNEWTLEILEELKREAVRHFPRDWLHQL. A phosphoserine; by host mark is found at S79 and S98.

This sequence belongs to the HIV-1 VPR protein family. In terms of assembly, homooligomer, may form homodimer. Interacts with p6-gag region of the Pr55 Gag precursor protein through a (Leu-X-X)4 motif near the C-terminus of the P6gag protein. Interacts with host UNG. May interact with host RAD23A/HHR23A. Interacts with host VPRBP/DCAF1, leading to hijack the CUL4A-RBX1-DDB1-DCAF1/VPRBP complex, mediating ubiquitination of host proteins such as TERT and ZGPAT and arrest of the cell cycle in G2 phase. Phosphorylated on several residues by host. These phosphorylations regulate VPR activity for the nuclear import of the HIV-1 pre-integration complex.

It is found in the virion. Its subcellular location is the host nucleus. The protein localises to the host extracellular space. Functionally, during virus replication, may deplete host UNG protein, and incude G2-M cell cycle arrest. Acts by targeting specific host proteins for degradation by the 26S proteasome, through association with the cellular CUL4A-DDB1 E3 ligase complex by direct interaction with host VPRPB/DCAF-1. Cell cycle arrest reportedly occurs within hours of infection and is not blocked by antiviral agents, suggesting that it is initiated by the VPR carried into the virion. Additionally, VPR induces apoptosis in a cell cycle dependent manner suggesting that these two effects are mechanistically linked. Detected in the serum and cerebrospinal fluid of AIDS patient, VPR may also induce cell death to bystander cells. In terms of biological role, during virus entry, plays a role in the transport of the viral pre-integration (PIC) complex to the host nucleus. This function is crucial for viral infection of non-dividing macrophages. May act directly at the nuclear pore complex, by binding nucleoporins phenylalanine-glycine (FG)-repeat regions. The chain is Protein Vpr from Pan troglodytes (Chimpanzee).